The chain runs to 118 residues: MISKPDKNKIRQKRHRRVRGKLSGTADRPRLNIFRSNTGIYAQVIDDVAGVTLASASTLDKEVSKGTKTEQAVVVGKLVAERAVAKGISEVVFDRGGYLYHGRVKALADAARENGLKF.

The tract at residues 1–24 is disordered; sequence MISKPDKNKIRQKRHRRVRGKLSG. Positions 10-20 are enriched in basic residues; it reads IRQKRHRRVRG.

This sequence belongs to the universal ribosomal protein uL18 family. As to quaternary structure, part of the 50S ribosomal subunit; part of the 5S rRNA/L5/L18/L25 subcomplex. Contacts the 5S and 23S rRNAs.

Its function is as follows. This is one of the proteins that bind and probably mediate the attachment of the 5S RNA into the large ribosomal subunit, where it forms part of the central protuberance. In Streptococcus mutans serotype c (strain ATCC 700610 / UA159), this protein is Large ribosomal subunit protein uL18.